The sequence spans 645 residues: Sodium-dependent nutrient amino acid transporter 1 (645 aa).

Residues 1–48 (MELKTMPHNGANGSPQHNNNNNSNNNNNVSSDTKTDNNEKEAQKKDEG) are disordered. The Cytoplasmic segment spans residues 1–51 (MELKTMPHNGANGSPQHNNNNNSNNNNNVSSDTKTDNNEKEAQKKDEGRTN). Over residues 18–32 (NNNNNSNNNNNVSSD) the composition is skewed to low complexity. Residues 33–48 (TKTDNNEKEAQKKDEG) are compositionally biased toward basic and acidic residues. The next 3 helical transmembrane spans lie at 52 to 72 (WSNG…LGNV), 85 to 105 (GAFL…MYYL), and 138 to 158 (TICI…YLFV). Residues Asn-191 and Asn-205 are each glycosylated (N-linked (GlcNAc...) asparagine). Transmembrane regions (helical) follow at residues 234 to 254 (IPDW…FLVI), 264 to 284 (AAYF…GRAV), 313 to 333 (AVVQ…MFAS), 347 to 367 (IVTT…FAIL), 407 to 427 (LFSV…IVAL), 454 to 474 (CGFL…LTLV), and 480 to 500 (TYVV…IYGL). A glycan (N-linked (GlcNAc...) asparagine) is linked at Asn-514. The next 2 helical transmembrane spans lie at 522–542 (CWSF…MATI) and 559–579 (AGWL…WWYI).

It belongs to the sodium:neurotransmitter symporter (SNF) (TC 2.A.22) family.

Its subcellular location is the membrane. Unusual broad substrate spectrum amino acid:sodium cotransporter that promotes absorption of the D isomers of essential amino acids. Neutral amino acids are the preferred substrates, especially methionine and phenylalanine. This chain is Sodium-dependent nutrient amino acid transporter 1, found in Drosophila mojavensis (Fruit fly).